The primary structure comprises 524 residues: Caffeate CoA-transferase (524 aa).

E323 (5-glutamyl coenzyme A thioester intermediate) is an active-site residue.

It belongs to the 3-oxoacid CoA-transferase family. Homodimer.

It catalyses the reaction hydrocaffeoyl-CoA + (E)-caffeate = 3-(3,4-dihydroxyphenyl)propanoate + (E)-caffeoyl-CoA. In terms of biological role, involved in caffeate respiration, which consists in the reduction of the C-C double bond of caffeate. CarA catalyzes an energy-saving CoA loop for caffeate activation in the steady state of caffeate respiration. It catalyzes the formation of caffeyl-CoA from caffeate with hydrocaffeyl-CoA as the CoA donor via a ping-pong mechanism. In addition to caffeate, the enzyme can utilize 4-coumarate or ferulate as CoA acceptor. Neither acetyl-CoA nor butyryl-CoA served as the CoA donor. In Acetobacterium woodii, this protein is Caffeate CoA-transferase.